Here is a 430-residue protein sequence, read N- to C-terminus: Glutamate-1-semialdehyde 2,1-aminomutase (430 aa).

At Lys-265 the chain carries N6-(pyridoxal phosphate)lysine.

It belongs to the class-III pyridoxal-phosphate-dependent aminotransferase family. HemL subfamily. As to quaternary structure, homodimer. It depends on pyridoxal 5'-phosphate as a cofactor.

It localises to the cytoplasm. It catalyses the reaction (S)-4-amino-5-oxopentanoate = 5-aminolevulinate. It functions in the pathway porphyrin-containing compound metabolism; protoporphyrin-IX biosynthesis; 5-aminolevulinate from L-glutamyl-tRNA(Glu): step 2/2. In Shewanella oneidensis (strain ATCC 700550 / JCM 31522 / CIP 106686 / LMG 19005 / NCIMB 14063 / MR-1), this protein is Glutamate-1-semialdehyde 2,1-aminomutase.